Consider the following 301-residue polypeptide: MPAAAQPSWWRLELEPPGELEESLLWRLESLGVHRLAVRFRPEAPEQRTLQAWLPEVDWPEPERVALAEALAQMAEPFGVALPSLRWELQPEEDWALSWKRHWQPDPVGQRLLILPAWLQVPAEHAERLALLIDPGSAFGTGSHPTTRLCLEALEKRSLTGSRVADLGCGSGILGIASLVLGAREVLASDTDSLAVRATAENAALNQAGAHLQVQLGSADVLQQLLAGAPADLLLCNILAPVLTALTPAFSELLTARGEGLLSGLLVDQAPALTAHLEAHGWRVTTEAEQGRWALLAIQRA.

S-adenosyl-L-methionine-binding residues include Thr147, Gly168, Asp190, and Asn237.

The protein belongs to the methyltransferase superfamily. PrmA family.

Its subcellular location is the cytoplasm. The catalysed reaction is L-lysyl-[protein] + 3 S-adenosyl-L-methionine = N(6),N(6),N(6)-trimethyl-L-lysyl-[protein] + 3 S-adenosyl-L-homocysteine + 3 H(+). Its function is as follows. Methylates ribosomal protein L11. The chain is Ribosomal protein L11 methyltransferase from Synechococcus sp. (strain RCC307).